A 354-amino-acid chain; its full sequence is Inositol-tetrakisphosphate 1-kinase 1 (354 aa).

Positions 1–16 (MRVHEEASEDKEREVE) are enriched in basic and acidic residues. Residues 1–24 (MRVHEEASEDKEREVEEAPDLMPL) are disordered. 1D-myo-inositol 1,3,4-trisphosphate contacts are provided by K53 and K95. ATP is bound by residues R130 and K180. The ATP-grasp domain occupies 140 to 347 (LNLSNAYGEV…FLLSLVQNKY (208 aa)). Positions 191 and 223 each coordinate 1D-myo-inositol 1,3,4-trisphosphate. ATP contacts are provided by residues 212–223 (QEFVNHGGILFK) and S238. Mg(2+)-binding residues include D303, D318, and N320. 1D-myo-inositol 1,3,4-trisphosphate is bound at residue N320.

This sequence belongs to the ITPK1 family. In terms of assembly, monomer. It depends on Mg(2+) as a cofactor. Expressed in roots, leaves, flowers, anthers and embryos.

The enzyme catalyses 1D-myo-inositol 3,4,5,6-tetrakisphosphate + ATP = 1D-myo-inositol 1,3,4,5,6-pentakisphosphate + ADP + H(+). It catalyses the reaction 1D-myo-inositol 1,3,4-trisphosphate + ATP = 1D-myo-inositol 1,3,4,5-tetrakisphosphate + ADP + H(+). It carries out the reaction 1D-myo-inositol 1,3,4-trisphosphate + ATP = 1D-myo-inositol 1,3,4,6-tetrakisphosphate + ADP + H(+). Kinase that can phosphorylate various inositol polyphosphate such as Ins(3,4,5,6)P4 or Ins(1,3,4)P3 and participates in phytic acid biosynthesis in developing seeds. Phytic acid is the primary storage form of phosphorus in cereal grains and other plant seeds. This Oryza sativa subsp. japonica (Rice) protein is Inositol-tetrakisphosphate 1-kinase 1.